We begin with the raw amino-acid sequence, 465 residues long: MSKTVLNAVGTPLYYSGSSTAWFSATGSGPTLHGTAGNDSMWGDSSVNVTMIGGRGDDIYYLYSSINRAYEAAGEGVDTISTWMSYTLPANFENLTVTGSGRFAFGNEADNIIKGGSGTQTIDGRGGNDVLIGAGGADTFVFARGNGSDLITDFNYDDIVRLDGYGFTSFEQILSNVAQEGADLRLHLADGESLVFANTTADELQAHQFRLSLDRSVLSQTFSDEFNTLQLRNGTSGVWDAKFWWAPEKGATLSSNGEQQWYINPSYEPTASVNPFSVNNGVLTITAAPASEAIQAEINGYDYTSGMLTTYSSFAQTYGYFEMRADMPDDQGVWPAFWLLPADGSWPPELDVVEMRGQDSNTVIATVHSNETGSRTSIENSVKVADASGFHTYGVLWTEEEIVWYFDDAAIARADTPSDMHDPMYMLVNLAVGGIAGTPRDGLADGSEMKIDYIKAYSLDADWQI.

Hemolysin-type calcium-binding repeat units lie at residues histidine 33–threonine 50, phenylalanine 105–isoleucine 122, and aspartate 123–phenylalanine 140. The 257-residue stretch at alanine 206–aspartate 462 folds into the GH16 domain. Glutamate 349 serves as the catalytic Nucleophile. The Proton donor role is filled by glutamate 354.

The protein belongs to the glycosyl hydrolase 16 family.

Its subcellular location is the secreted. The protein operates within glycan metabolism; exopolysaccharide biosynthesis. Its function is as follows. Cleaves high molecular weight succinoglycan to yield LMW succinoglycan. Dynamically regulates the molecular weight distribution of succinoglycan by cleaving nascent succinoglycan only during a limited period after its synthesis, perhaps before it undergoes a time-dependent change in its conformation or aggregation state. This Rhizobium meliloti (strain 1021) (Ensifer meliloti) protein is Endo-1,3-1,4-beta-glycanase ExsH (exsH).